We begin with the raw amino-acid sequence, 278 residues long: Formamidopyrimidine-DNA glycosylase (278 aa).

Catalysis depends on Pro2, which acts as the Schiff-base intermediate with DNA. Catalysis depends on Glu3, which acts as the Proton donor. The active-site Proton donor; for beta-elimination activity is Lys58. The DNA site is built by His91, Arg109, and Arg158. Residues 243 to 277 (KVYDRKGLPCKVCKTPISQMVQGQRTTYFCSQCQK) form an FPG-type zinc finger. The Proton donor; for delta-elimination activity role is filled by Arg267.

This sequence belongs to the FPG family. As to quaternary structure, monomer. It depends on Zn(2+) as a cofactor.

The catalysed reaction is Hydrolysis of DNA containing ring-opened 7-methylguanine residues, releasing 2,6-diamino-4-hydroxy-5-(N-methyl)formamidopyrimidine.. The enzyme catalyses 2'-deoxyribonucleotide-(2'-deoxyribose 5'-phosphate)-2'-deoxyribonucleotide-DNA = a 3'-end 2'-deoxyribonucleotide-(2,3-dehydro-2,3-deoxyribose 5'-phosphate)-DNA + a 5'-end 5'-phospho-2'-deoxyribonucleoside-DNA + H(+). Involved in base excision repair of DNA damaged by oxidation or by mutagenic agents. Acts as a DNA glycosylase that recognizes and removes damaged bases. Has a preference for oxidized purines, such as 7,8-dihydro-8-oxoguanine (8-oxoG). Has AP (apurinic/apyrimidinic) lyase activity and introduces nicks in the DNA strand. Cleaves the DNA backbone by beta-delta elimination to generate a single-strand break at the site of the removed base with both 3'- and 5'-phosphates. The protein is Formamidopyrimidine-DNA glycosylase of Polynucleobacter necessarius subsp. necessarius (strain STIR1).